The sequence spans 225 residues: Cell division protein SepF (225 aa).

Positions 21–134 (DEYLDEPEPT…GPLFDEGGPL (114 aa)) are disordered. Composition is skewed to basic and acidic residues over residues 28–54 (EPTR…RDFA), 77–86 (RYESPRHSSR), and 115–127 (TRSD…RGPL).

Belongs to the SepF family. In terms of assembly, homodimer. Interacts with FtsZ.

The protein localises to the cytoplasm. Cell division protein that is part of the divisome complex and is recruited early to the Z-ring. Probably stimulates Z-ring formation, perhaps through the cross-linking of FtsZ protofilaments. Its function overlaps with FtsA. The protein is Cell division protein SepF of Rhodococcus opacus (strain B4).